A 363-amino-acid polypeptide reads, in one-letter code: Ribosomal RNA large subunit methyltransferase M (363 aa).

S-adenosyl-L-methionine is bound by residues serine 194, 227–230 (CPGG), aspartate 246, aspartate 266, and aspartate 284. Lysine 313 (proton acceptor) is an active-site residue.

This sequence belongs to the class I-like SAM-binding methyltransferase superfamily. RNA methyltransferase RlmE family. RlmM subfamily. As to quaternary structure, monomer.

The protein resides in the cytoplasm. It catalyses the reaction cytidine(2498) in 23S rRNA + S-adenosyl-L-methionine = 2'-O-methylcytidine(2498) in 23S rRNA + S-adenosyl-L-homocysteine + H(+). Its function is as follows. Catalyzes the 2'-O-methylation at nucleotide C2498 in 23S rRNA. This chain is Ribosomal RNA large subunit methyltransferase M, found in Haemophilus influenzae (strain PittEE).